We begin with the raw amino-acid sequence, 364 residues long: Lipoyl synthase, chloroplastic (364 aa).

Residues 1–70 constitute a chloroplast transit peptide; sequence MEQTLFNPSI…PNVKKPEWLR (70 aa). Residues 32-52 show a composition bias toward low complexity; it reads STNSPSSNTKTTTVTVPSKKT. The interval 32 to 64 is disordered; that stretch reads STNSPSSNTKTTTVTVPSKKTMGPYTGRDPNVK. Positions 95, 100, 106, 126, 130, 133, and 341 each coordinate [4Fe-4S] cluster. The region spanning 109 to 330 is the Radical SAM core domain; sequence GGGDGIATAT…KEYGESIGFR (222 aa).

It belongs to the radical SAM superfamily. Lipoyl synthase family. Requires [4Fe-4S] cluster as cofactor.

The protein resides in the plastid. Its subcellular location is the chloroplast. It catalyses the reaction [[Fe-S] cluster scaffold protein carrying a second [4Fe-4S](2+) cluster] + N(6)-octanoyl-L-lysyl-[protein] + 2 oxidized [2Fe-2S]-[ferredoxin] + 2 S-adenosyl-L-methionine + 4 H(+) = [[Fe-S] cluster scaffold protein] + N(6)-[(R)-dihydrolipoyl]-L-lysyl-[protein] + 4 Fe(3+) + 2 hydrogen sulfide + 2 5'-deoxyadenosine + 2 L-methionine + 2 reduced [2Fe-2S]-[ferredoxin]. It functions in the pathway protein modification; protein lipoylation via endogenous pathway; protein N(6)-(lipoyl)lysine from octanoyl-[acyl-carrier-protein]: step 2/2. Functionally, catalyzes the radical-mediated insertion of two sulfur atoms into the C-6 and C-8 positions of the octanoyl moiety bound to the lipoyl domains of lipoate-dependent enzymes, thereby converting the octanoylated domains into lipoylated derivatives. This chain is Lipoyl synthase, chloroplastic, found in Ricinus communis (Castor bean).